The following is a 574-amino-acid chain: Pyruvate kinase PKLR (574 aa).

4 positions are modified to phosphoserine: Ser-2, Ser-19, Ser-26, and Ser-43. Arg-116 is a binding site for substrate. K(+)-binding residues include Asn-118, Ser-120, Asp-156, and Thr-157. 118-121 (NFSH) contacts ATP. Residues Arg-163 and Lys-250 each contribute to the ATP site. A Phosphoserine modification is found at Ser-292. Lys-313 is a binding site for substrate. Glu-315 is a binding site for Mn(2+). Positions 338, 339, and 371 each coordinate substrate. Asp-339 contributes to the Mn(2+) binding site. Beta-D-fructose 1,6-bisphosphate-binding positions include 475 to 480 (TKTGRS), Trp-525, Arg-532, and 559 to 564 (RPGSGY).

The protein belongs to the pyruvate kinase family. As to quaternary structure, homotetramer. It depends on Mg(2+) as a cofactor. Requires Mn(2+) as cofactor. K(+) is required as a cofactor.

It carries out the reaction pyruvate + ATP = phosphoenolpyruvate + ADP + H(+). It participates in carbohydrate degradation; glycolysis; pyruvate from D-glyceraldehyde 3-phosphate: step 5/5. With respect to regulation, allosterically activated by fructose 1,6-bisphosphate. In terms of biological role, pyruvate kinase that catalyzes the conversion of phosphoenolpyruvate to pyruvate with the synthesis of ATP, and which plays a key role in glycolysis. The chain is Pyruvate kinase PKLR (Pklr) from Rattus norvegicus (Rat).